The sequence spans 654 residues: tRNA 5-methylaminomethyl-2-thiouridine biosynthesis bifunctional protein MnmC (654 aa).

The segment at 1–236 is tRNA (mnm(5)s(2)U34)-methyltransferase; the sequence is MTDRIVPATL…KRAMLVGEFA (236 aa). Residues 260–654 form an FAD-dependent cmnm(5)s(2)U34 oxidoreductase region; the sequence is IGAGLAGCAA…IRALRRGRVA (395 aa).

This sequence in the N-terminal section; belongs to the methyltransferase superfamily. tRNA (mnm(5)s(2)U34)-methyltransferase family. The protein in the C-terminal section; belongs to the DAO family. Requires FAD as cofactor.

It localises to the cytoplasm. The catalysed reaction is 5-aminomethyl-2-thiouridine(34) in tRNA + S-adenosyl-L-methionine = 5-methylaminomethyl-2-thiouridine(34) in tRNA + S-adenosyl-L-homocysteine + H(+). Its function is as follows. Catalyzes the last two steps in the biosynthesis of 5-methylaminomethyl-2-thiouridine (mnm(5)s(2)U) at the wobble position (U34) in tRNA. Catalyzes the FAD-dependent demodification of cmnm(5)s(2)U34 to nm(5)s(2)U34, followed by the transfer of a methyl group from S-adenosyl-L-methionine to nm(5)s(2)U34, to form mnm(5)s(2)U34. In Burkholderia thailandensis (strain ATCC 700388 / DSM 13276 / CCUG 48851 / CIP 106301 / E264), this protein is tRNA 5-methylaminomethyl-2-thiouridine biosynthesis bifunctional protein MnmC.